A 240-amino-acid chain; its full sequence is Transcription factor bHLH101 (240 aa).

The 53-residue stretch at 65–117 (EKKLNHNASERDRRRKLNALYSSLRALLPLSDQKRKLSIPMTVARVVKYIPEQ) folds into the bHLH domain.

In terms of assembly, homodimer. In terms of tissue distribution, flowers.

It is found in the nucleus. This is Transcription factor bHLH101 (BHLH101) from Arabidopsis thaliana (Mouse-ear cress).